The following is a 422-amino-acid chain: UDP-N-acetylglucosamine 1-carboxyvinyltransferase (422 aa).

22 to 23 (KN) contacts phosphoenolpyruvate. Arginine 93 lines the UDP-N-acetyl-alpha-D-glucosamine pocket. Cysteine 117 (proton donor) is an active-site residue. Cysteine 117 is subject to 2-(S-cysteinyl)pyruvic acid O-phosphothioketal. Residues 122-126 (RPVDL), aspartate 308, and leucine 330 contribute to the UDP-N-acetyl-alpha-D-glucosamine site.

Belongs to the EPSP synthase family. MurA subfamily.

The protein resides in the cytoplasm. It carries out the reaction phosphoenolpyruvate + UDP-N-acetyl-alpha-D-glucosamine = UDP-N-acetyl-3-O-(1-carboxyvinyl)-alpha-D-glucosamine + phosphate. The protein operates within cell wall biogenesis; peptidoglycan biosynthesis. In terms of biological role, cell wall formation. Adds enolpyruvyl to UDP-N-acetylglucosamine. The chain is UDP-N-acetylglucosamine 1-carboxyvinyltransferase from Helicobacter acinonychis (strain Sheeba).